Reading from the N-terminus, the 140-residue chain is Natriuretic peptides B (140 aa).

Residues 1–26 (MEPCAALPRALLLLLFLHLSPLGGRP) form the signal peptide. The interval 71 to 94 (LEPLHRSHSPAEAPEAGGTPRGVL) is disordered. Cysteines 118 and 134 form a disulfide.

Belongs to the natriuretic peptide family. In terms of processing, the precursor molecule is proteolytically cleaved by the endoproteases FURIN or CORIN at Arg-108 to produce the brain natriuretic peptide 32. CORIN also cleaves the precursor molecule at additional residues including Arg-105, Arg-108 and possibly Lys-111. Undergoes further proteolytic cleavage by various proteases such as DPP4, MME and possibly FAP, to give rise to a variety of shorter peptides. Cleaved at Pro-110 by the prolyl endopeptidase FAP (seprase) activity (in vitro). Degraded by IDE. During IDE degradation, the resulting products initially increase the activation of NPR1 and can also stimulate NPR2 to produce cGMP before the fragments are completely degraded and inactivated by IDE (in vitro). In terms of tissue distribution, brain and also in atria, but at much lower levels than ANP.

The protein resides in the secreted. Its function is as follows. Cardiac hormone that plays a key role in mediating cardio-renal homeostasis. May also function as a paracrine antifibrotic factor in the heart. Acts by specifically binding and stimulating NPR1 to produce cGMP, which in turn activates effector proteins that drive various biological responses. Involved in regulating the extracellular fluid volume and maintaining the fluid-electrolyte balance through natriuresis, diuresis, vasorelaxation, and inhibition of renin and aldosterone secretion. Binds the clearance receptor NPR3. May affect cardio-renal homeostasis. Able to promote the production of cGMP although its potency is very low compared to brain natriuretic peptide 32. In Canis lupus familiaris (Dog), this protein is Natriuretic peptides B (NPPB).